The sequence spans 294 residues: Metallophosphoesterase MPPED2 (294 aa).

Mn(2+)-binding residues include D65, H67, D86, N117, and H213. A GMP-binding site is contributed by 117–118; the sequence is NH. GMP is bound by residues 225–226 and 254–255; these read KE and HE. H254 is a Mn(2+) binding site.

Belongs to the UPF0046 family. Homodimer. The cofactor is Mn(2+). Requires Co(2+) as cofactor. Expressed in fetal brain (at protein level). detected in fetal and adult brain.

Its activity is regulated as follows. Inhibited by nmolar levels of AMP and GMP. Its function is as follows. Displays low metallophosphoesterase activity (in vitro). May play a role in the development of the nervous system. The sequence is that of Metallophosphoesterase MPPED2 (Mpped2) from Rattus norvegicus (Rat).